Reading from the N-terminus, the 184-residue chain is Homeobox protein LOX10 (184 aa).

Disordered regions lie at residues 1-29 (KIVS…PLQH) and 129-184 (YKTK…NKPG). Positions 76 to 135 (RRKRRILFSQAQIYELERRFRQQKYLSAPEREHLATFIGLTPTQVKIWFQNHRYKTKKSK) form a DNA-binding region, homeobox. 2 stretches are compositionally biased toward low complexity: residues 140-161 (NSPS…ASTT) and 174-184 (SNTTNNNNKPG).

This sequence belongs to the NK-2 homeobox family. Expressed in a segmental pattern in the endoderm and in the cephalic nervous system.

The protein localises to the nucleus. Its function is as follows. May play a role in patterning the gut. The chain is Homeobox protein LOX10 (LOX10) from Helobdella triserialis (Leech).